We begin with the raw amino-acid sequence, 692 residues long: Vitamin B12-dependent ribonucleoside-diphosphate reductase (692 aa).

The ATP-cone domain occupies 7–95; the sequence is AKVRRRDGTL…IYRQRRAELR (89 aa). Residues Ser177, 192 to 193, Gly221, 375 to 379, and 520 to 524 each bind substrate; these read GC, NPCGE, and PTGTI. Cys193 and Cys388 are disulfide-bonded. The active-site Proton acceptor is Asn375. Catalysis depends on Cys377, which acts as the Cysteine radical intermediate. The active-site Proton acceptor is Glu379.

This sequence belongs to the ribonucleoside diphosphate reductase class-2 family. Adenosylcob(III)alamin is required as a cofactor.

It carries out the reaction a 2'-deoxyribonucleoside 5'-diphosphate + [thioredoxin]-disulfide + H2O = a ribonucleoside 5'-diphosphate + [thioredoxin]-dithiol. Provides the precursors necessary for DNA synthesis. Catalyzes the biosynthesis of deoxyribonucleotides from the corresponding ribonucleotides. The protein is Vitamin B12-dependent ribonucleoside-diphosphate reductase (nrdZ) of Mycobacterium tuberculosis (strain CDC 1551 / Oshkosh).